The following is a 183-amino-acid chain: Inosine/xanthosine triphosphatase (183 aa).

Belongs to the YjjX NTPase family. In terms of assembly, homodimer. It depends on Mg(2+) as a cofactor. Mn(2+) serves as cofactor.

The catalysed reaction is XTP + H2O = XDP + phosphate + H(+). The enzyme catalyses ITP + H2O = IDP + phosphate + H(+). Phosphatase that hydrolyzes non-canonical purine nucleotides such as XTP and ITP to their respective diphosphate derivatives. Probably excludes non-canonical purines from DNA/RNA precursor pool, thus preventing their incorporation into DNA/RNA and avoiding chromosomal lesions. The polypeptide is Inosine/xanthosine triphosphatase (Vibrio cholerae serotype O1 (strain ATCC 39315 / El Tor Inaba N16961)).